Consider the following 35-residue polypeptide: uncharacterized protein (35 aa).

Residues Met1–Cys18 form the signal peptide.

This is an uncharacterized protein from Saccharomyces cerevisiae (strain ATCC 204508 / S288c) (Baker's yeast).